Consider the following 131-residue polypeptide: Small ribosomal subunit protein bS6 (131 aa).

The tract at residues 96–131 (ITEASPMAKAKDERDSRRGPAGDRSYDEANAEEIAE) is disordered. Basic and acidic residues predominate over residues 104–122 (KAKDERDSRRGPAGDRSYD).

This sequence belongs to the bacterial ribosomal protein bS6 family.

Binds together with bS18 to 16S ribosomal RNA. The protein is Small ribosomal subunit protein bS6 of Shewanella oneidensis (strain ATCC 700550 / JCM 31522 / CIP 106686 / LMG 19005 / NCIMB 14063 / MR-1).